The following is a 153-amino-acid chain: Large ribosomal subunit protein uL22 (153 aa).

Belongs to the universal ribosomal protein uL22 family. Part of the 50S ribosomal subunit.

This protein binds specifically to 23S rRNA. It makes multiple contacts with different domains of the 23S rRNA in the assembled 50S subunit and ribosome. In terms of biological role, the globular domain of the protein is located near the polypeptide exit tunnel on the outside of the subunit, while an extended beta-hairpin is found that lines the wall of the exit tunnel in the center of the 70S ribosome. The chain is Large ribosomal subunit protein uL22 from Methanocella arvoryzae (strain DSM 22066 / NBRC 105507 / MRE50).